The chain runs to 631 residues: Forkhead box protein O1 (631 aa).

Residues 1 to 11 (MAEAPQPPPPL) show a composition bias toward pro residues. Disordered stretches follow at residues 1–57 (MAEA…PAAG), 90–147 (DIRQ…SRRN), 223–324 (SSWW…MPEQ), and 372–404 (PNSS…PNSE). Composition is skewed to low complexity over residues 37–48 (NPSSSANSSPAP) and 100–135 (QQQQ…PLGA). A DNA-binding region (fork-head) is located at residues 149–243 (WGNLSYADLI…KNGKSPRRRA (95 aa)). The span at 253–264 (AKSRGRAAKKKA) shows a compositional bias: basic residues. Residues 265–282 (SMQSSQDGSSDSPGSQFS) show a composition bias toward low complexity. Polar residues-rich tracts occupy residues 303–315 (RPRT…TISG) and 381–403 (ASMM…SPNS).

Post-translationally, phosphorylated by AKT1; insulin-induced. IGF1 rapidly induces phosphorylation of Thr-28, Ser-245 and Ser-308. Phosphorylation of Ser-245 decreases DNA-binding activity and promotes the phosphorylation of Thr-28, and Ser-308, which leads to nuclear exclusion and loss of function. Phosphorylation of Ser-318 is independent of IGF1 and leads to reduced function. In terms of tissue distribution, localized to the animal hemisphere during early cleavage stages. At early tadpole stages, expressed in the branchial arches, pronephros and liver. Within the head, expressed in the forming thyroid gland and in head mesenchyme anterior to the eyes.

It localises to the cytoplasm. The protein resides in the nucleus. Transcription factor that regulates metabolic homeostasis in response to oxidative stress. Binds to the consensus sequence 5'-TT[G/A]TTTTG-3' and the related Daf-16 family binding element (DBE) with consensus sequence 5'-TT[G/A]TTTAC-3'. Main regulator of redox balance and osteoblast numbers and controls bone mass. Orchestrates the endocrine function of the skeleton in regulating glucose metabolism. Also acts as a key regulator of chondrogenic commitment of skeletal progenitor cells in response to lipid availability: when lipids levels are low, translocates to the nucleus and promotes expression of sox9, which induces chondrogenic commitment and suppresses fatty acid oxidation. Acts synergistically with atf4 to suppress osteocalcin/bglap activity, increasing glucose levels and triggering glucose intolerance and insulin insensitivity. Also suppresses the transcriptional activity of runx2, an upstream activator of osteocalcin/bglap. May act as a positive regulator of apoptosis in cardiac smooth muscle cells as a result of its transcriptional activation of pro-apoptotic genes. The chain is Forkhead box protein O1 from Xenopus laevis (African clawed frog).